A 237-amino-acid chain; its full sequence is uncharacterized protein (237 aa).

The 119-residue stretch at 119–237 (VTVRRLTPTD…PAGLDGGLPA (119 aa)) folds into the N-acetyltransferase domain.

This is an uncharacterized protein from Streptomyces virginiae (Streptomyces cinnamonensis).